The sequence spans 730 residues: Polyribonucleotide nucleotidyltransferase (730 aa).

Mg(2+) contacts are provided by aspartate 494 and aspartate 500. The KH domain occupies 561–622; that stretch reads PRIQTIQIDP…EAMNRAIQEI (62 aa). The S1 motif domain maps to 642 to 711; the sequence is GKIYTGRVTG…RSGKVRLSRK (70 aa).

The protein belongs to the polyribonucleotide nucleotidyltransferase family. Requires Mg(2+) as cofactor.

It localises to the cytoplasm. It catalyses the reaction RNA(n+1) + phosphate = RNA(n) + a ribonucleoside 5'-diphosphate. In terms of biological role, involved in mRNA degradation. Catalyzes the phosphorolysis of single-stranded polyribonucleotides processively in the 3'- to 5'-direction. The sequence is that of Polyribonucleotide nucleotidyltransferase from Opitutus terrae (strain DSM 11246 / JCM 15787 / PB90-1).